A 233-amino-acid polypeptide reads, in one-letter code: Cysteine-rich venom protein LIO1 (233 aa).

The first 18 residues, 1-18, serve as a signal peptide directing secretion; that stretch reads MIVFILLSFAAVLQQSFG. The region spanning 37–165 is the SCP domain; that stretch reads VDTHNSYRRS…PYNYFYVCQY (129 aa). 7 cysteine pairs are disulfide-bonded: cysteine 74–cysteine 152, cysteine 91–cysteine 166, cysteine 147–cysteine 163, cysteine 185–cysteine 192, cysteine 188–cysteine 197, cysteine 210–cysteine 228, and cysteine 219–cysteine 232. The region spanning 201–233 is the ShKT domain; that stretch reads CTSENVFTNCNDMVKESGCQDERMKSICPASCF.

It belongs to the CRISP family. In terms of tissue distribution, expressed by the venom gland.

It is found in the secreted. Functionally, blocks contraction of smooth muscle elicited by high potassium-induced depolarization, but does not block caffeine-stimulated contraction. May target voltage-gated calcium channels on smooth muscle. The protein is Cysteine-rich venom protein LIO1 of Erythrolamprus poecilogyrus (Water snake).